Reading from the N-terminus, the 216-residue chain is ATP synthase subunit 5, mitochondrial (216 aa).

It belongs to the ATPase delta chain family. In terms of assembly, F-type ATPases have 2 components, CF(1) - the catalytic core - and CF(0) - the membrane proton channel. CF(1) has five subunits: alpha(3), beta(3), gamma(1), delta(1), epsilon(1). CF(0) has three main subunits: a, b and c.

The protein localises to the mitochondrion. The protein resides in the mitochondrion inner membrane. Mitochondrial membrane ATP synthase (F(1)F(0) ATP synthase or Complex V) produces ATP from ADP in the presence of a proton gradient across the membrane which is generated by electron transport complexes of the respiratory chain. F-type ATPases consist of two structural domains, F(1) - containing the extramembraneous catalytic core and F(0) - containing the membrane proton channel, linked together by a central stalk and a peripheral stalk. During catalysis, ATP synthesis in the catalytic domain of F(1) is coupled via a rotary mechanism of the central stalk subunits to proton translocation. Part of the complex F(0) domain and the peripheric stalk, which acts as a stator to hold the catalytic alpha(3)beta(3) subcomplex and subunit a/ATP6 static relative to the rotary elements. The protein is ATP synthase subunit 5, mitochondrial (atp5) of Schizosaccharomyces pombe (strain 972 / ATCC 24843) (Fission yeast).